The chain runs to 148 residues: Ubiquitin-conjugating enzyme E2-17 kDa (148 aa).

A UBC core domain is found at 1 to 147; sequence MASKRILKEL…ARSWTQKYAM (147 aa). Residue Cys85 is the Glycyl thioester intermediate of the active site.

It belongs to the ubiquitin-conjugating enzyme family.

It catalyses the reaction S-ubiquitinyl-[E1 ubiquitin-activating enzyme]-L-cysteine + [E2 ubiquitin-conjugating enzyme]-L-cysteine = [E1 ubiquitin-activating enzyme]-L-cysteine + S-ubiquitinyl-[E2 ubiquitin-conjugating enzyme]-L-cysteine.. The protein operates within protein modification; protein ubiquitination. Catalyzes the covalent attachment of ubiquitin to other proteins. Mediates the selective degradation of short-lived and abnormal proteins. In Solanum lycopersicum (Tomato), this protein is Ubiquitin-conjugating enzyme E2-17 kDa.